A 612-amino-acid chain; its full sequence is FAD-linked oxidoreductase easE (612 aa).

The 185-residue stretch at 129–313 (HQGRIPLYSA…TRATMRVFPD (185 aa)) folds into the FAD-binding PCMH-type domain.

It belongs to the oxygen-dependent FAD-linked oxidoreductase family. Requires FAD as cofactor.

Its pathway is alkaloid biosynthesis; ergot alkaloid biosynthesis. FAD-linked oxidoreductase; part of the gene cluster that mediates the biosynthesis of fungal ergot alkaloid. DmaW catalyzes the first step of ergot alkaloid biosynthesis by condensing dimethylallyl diphosphate (DMAP) and tryptophan to form 4-dimethylallyl-L-tryptophan. The second step is catalyzed by the methyltransferase easF that methylates 4-dimethylallyl-L-tryptophan in the presence of S-adenosyl-L-methionine, resulting in the formation of 4-dimethylallyl-L-abrine. The catalase easC and the FAD-dependent oxidoreductase easE then transform 4-dimethylallyl-L-abrine to chanoclavine-I which is further oxidized by easD in the presence of NAD(+), resulting in the formation of chanoclavine-I aldehyde. Chanoclavine-I aldehyde is the precursor of ergoamides and ergopeptines in Clavicipitaceae, and clavine-type alcaloids such as fumiclavine in Trichocomaceae. However, the metabolites downstream of chanoclavine-I aldehyde in Arthrodermataceae have not been identified yet. In Arthroderma otae (strain ATCC MYA-4605 / CBS 113480) (Microsporum canis), this protein is FAD-linked oxidoreductase easE.